A 552-amino-acid chain; its full sequence is MDNMSITNTPTSNDACLSIVHSLMCHRQGGESETFAKRAIESLVKKLKEKKDELDSLITAITTNGAHPSKCVTIQRTLDGRLQVAGRKGFPHVIYARLWRWPDLHKNELKHVKYCQYAFDLKCDSVCVNPYHYERVVSPGIDLSGLTLQSNAPSGMLVKDEYVHDFEGQPSLATEGHSIQTIQHPPSNRASTETYSTPALLAPSESNATSTTNFPNIPVASTSQPASILAGSHSEGLLQIASGPQPGQQQNGFTGQPATYHHNSTTTWTGSRTAPYPPNLPHHQNGHLQHHPPMPPHPGHYWPVHNELAFQPPISNHPAPEYWCSIAYFEMDVQVGETFKVPSSCPIVTVDGYVDPSGGDRFCLGQLSNVHRTEAIERARLHIGKGVQLECKGEGDVWVRCLSDHAVFVQSYYLDREAGRAPGDAVHKIYPSAYIKVFDLRQCHRQMQQQAATAQAAAAAQAAAVAGNIPGPGSVGGIAPAISLSAAAGIGVDDLRRLCILRMSFVKGWGPDYPRQSIKETPCWIEIHLHRALQLLDEVLHTMPIADPQPLD.

A mediates interaction with ZBTB7A region spans residues 1 to 322; it reads MDNMSITNTP…PISNHPAPEY (322 aa). One can recognise an MH1 domain in the interval 18–142; it reads SIVHSLMCHR…YERVVSPGID (125 aa). An N6-acetyllysine modification is found at Lys37. The tract at residues 44–69 is required for interaction with TSC22D1; it reads VKKLKEKKDELDSLITAITTNGAHPS. Cys71 is a Zn(2+) binding site. A Glycyl lysine isopeptide (Lys-Gly) (interchain with G-Cter in SUMO2) cross-link involves residue Lys113. Positions 115, 127, and 132 each coordinate Zn(2+). The disordered stretch occupies residues 264–297; sequence STTTWTGSRTAPYPPNLPHHQNGHLQHHPPMPPH. The tract at residues 275–320 is SAD; the sequence is PYPPNLPHHQNGHLQHHPPMPPHPGHYWPVHNELAFQPPISNHPAP. The MH2 domain maps to 323-552; that stretch reads WCSIAYFEMD…MPIADPQPLD (230 aa). N6-acetyllysine is present on residues Lys428 and Lys507. A Glycyl lysine isopeptide (Lys-Gly) (interchain with G-Cter in ubiquitin) cross-link involves residue Lys519.

It belongs to the dwarfin/SMAD family. In terms of assembly, monomer; in the absence of TGF-beta activation. Heterotrimer; on TGF-beta activation. Heterotrimer composed of two molecules of a C-terminally phosphorylated R-SMAD molecule, SMAD2 or SMAD3, and one molecule of SMAD4 to form the transcriptional active SMAD2/SMAD3-SMAD4 complex. Found in a ternary complex composed of SMAD4, STK11/LKB1 and STK11IP. Found in a complex with SMAD1 and YY1. Identified in a complex that contains at least ZNF451, SMAD2, SMAD3 and SMAD4. Interacts with ATF2, COPS5, DACH1, MSG1, SKI, STK11/LKB1, STK11IP and TRIM33. Associates with ZNF423 or ZNF521 in response to BMP2 leading to activate transcription of BMP target genes. Interacts with USP9X. Interacts with RBPMS. Interacts with WWTR1 (via coiled-coil domain). Interacts with CITED1 and CITED2. Interacts with PDPK1 (via PH domain). Interacts with VPS39; this interaction affects heterodimer formation with SMAD3, but not with SMAD2, and leads to inhibition of SMAD3-dependent transcription activation. Interactions with VPS39 and SMAD2 may be mutually exclusive. Interacts (via MH2 domain) with ZNF451 (via N-terminal zinc-finger domains). Interacts with ZC3H3. Interacts weakly with ZNF8. Interacts with NUP93 and IPO7; translocates SMAD4 to the nucleus through the NPC upon BMP7 stimulation resulting in activation of SMAD4 signaling. Interacts with CREB3L1, the interaction takes place upon TGFB1 induction and SMAD4 acts as a CREB3L1 coactivator to induce the expression of genes involved in the assembly of collagen extracellular matrix. Interacts with DLX1. Interacts with ZBTB7A; the interaction is direct and stimulated by TGFB1. Interacts with CREBBP; the recruitment of this transcriptional coactivator is negatively regulated by ZBTB7A. Interacts with EP300; the interaction with this transcriptional coactivator is negatively regulated by ZBTB7A. Interacts with HDAC1. Interacts (via MH2 domain) with ZMIZ1 (via SP-RING-type domain); in the TGF-beta signaling pathway increases the activity of the SMAD3/SMAD4 transcriptional complex. Interacts (via N-terminus) with TSC22D1. Phosphorylated by PDPK1. Post-translationally, monoubiquitinated on Lys-519 by E3 ubiquitin-protein ligase TRIM33. Monoubiquitination hampers its ability to form a stable complex with activated SMAD2/3 resulting in inhibition of TGF-beta/BMP signaling cascade. Deubiquitination by USP9X restores its competence to mediate TGF-beta signaling.

The protein resides in the cytoplasm. It is found in the nucleus. Functionally, common SMAD (co-SMAD) is the coactivator and mediator of signal transduction by TGF-beta (transforming growth factor). Component of the heterotrimeric SMAD2/SMAD3-SMAD4 complex that forms in the nucleus and is required for the TGF-mediated signaling. Promotes binding of the SMAD2/SMAD4/FAST-1 complex to DNA and provides an activation function required for SMAD1 or SMAD2 to stimulate transcription. Component of the multimeric SMAD3/SMAD4/JUN/FOS complex which forms at the AP1 promoter site; required for synergistic transcriptional activity in response to TGF-beta. Acts synergistically with SMAD1 and YY1 in bone morphogenetic protein (BMP)-mediated cardiac-specific gene expression. Binds to SMAD binding elements (SBEs) (5'-GTCT/AGAC-3') within BMP response element (BMPRE) of cardiac activating regions. May act as a tumor suppressor. Positively regulates PDPK1 kinase activity by stimulating its dissociation from the 14-3-3 protein YWHAQ which acts as a negative regulator. In muscle physiology, plays a central role in the balance between atrophy and hypertrophy. When recruited by MSTN, promotes atrophy response via phosphorylated SMAD2/4. MSTN decrease causes SMAD4 release and subsequent recruitment by the BMP pathway to promote hypertrophy via phosphorylated SMAD1/5/8. This is Mothers against decapentaplegic homolog 4 (SMAD4) from Sus scrofa (Pig).